A 591-amino-acid chain; its full sequence is Uncoordinated protein 58 (591 aa).

The disordered stretch occupies residues 1–24 (MFFYSPNVAPQPSSTSHRRPTLTH). A helical membrane pass occupies residues 184–204 (VILVSVLIGYLCLGAWILMLL). N-linked (GlcNAc...) asparagine glycosylation occurs at asparagine 226. Helical transmembrane passes span 289-309 (TFPT…YGEV), 318-338 (VFSV…AADI), 400-420 (PIGA…AMFI), 428-448 (FIHA…GDIV), and 453-473 (IFLS…TMCV).

It belongs to the two pore domain potassium channel (TC 1.A.1.8) family.

Its subcellular location is the membrane. Its function is as follows. Has a role in mobility, possibly in the transport of potassium in muscles. The polypeptide is Uncoordinated protein 58 (Caenorhabditis elegans).